Consider the following 240-residue polypeptide: 2,3,4,5-tetrahydropyridine-2,6-dicarboxylate N-acetyltransferase (240 aa).

This sequence belongs to the transferase hexapeptide repeat family. DapH subfamily.

It catalyses the reaction (S)-2,3,4,5-tetrahydrodipicolinate + acetyl-CoA + H2O = L-2-acetamido-6-oxoheptanedioate + CoA. The protein operates within amino-acid biosynthesis; L-lysine biosynthesis via DAP pathway; LL-2,6-diaminopimelate from (S)-tetrahydrodipicolinate (acetylase route): step 1/3. Catalyzes the transfer of an acetyl group from acetyl-CoA to tetrahydrodipicolinate. The polypeptide is 2,3,4,5-tetrahydropyridine-2,6-dicarboxylate N-acetyltransferase (Bacillus anthracis (strain A0248)).